Reading from the N-terminus, the 368-residue chain is Peptide chain release factor 2 (368 aa).

Gln-251 bears the N5-methylglutamine mark.

It belongs to the prokaryotic/mitochondrial release factor family. Post-translationally, methylated by PrmC. Methylation increases the termination efficiency of RF2.

The protein resides in the cytoplasm. Functionally, peptide chain release factor 2 directs the termination of translation in response to the peptide chain termination codons UGA and UAA. The sequence is that of Peptide chain release factor 2 from Wolinella succinogenes (strain ATCC 29543 / DSM 1740 / CCUG 13145 / JCM 31913 / LMG 7466 / NCTC 11488 / FDC 602W) (Vibrio succinogenes).